Reading from the N-terminus, the 287-residue chain is Polyamine aminopropyltransferase (287 aa).

Positions 5-238 (EIWYETLHAN…GIMTFAWASN (234 aa)) constitute a PABS domain. Residue Gln33 coordinates S-methyl-5'-thioadenosine. Spermidine-binding residues include His64 and Asp88. S-methyl-5'-thioadenosine is bound by residues Glu108 and 140-141 (DG). Residue Asp158 is the Proton acceptor of the active site. Spermidine is bound at residue 158-161 (DCTD). Position 165 (Pro165) interacts with S-methyl-5'-thioadenosine.

It belongs to the spermidine/spermine synthase family. In terms of assembly, homodimer or homotetramer.

It localises to the cytoplasm. The catalysed reaction is S-adenosyl 3-(methylsulfanyl)propylamine + putrescine = S-methyl-5'-thioadenosine + spermidine + H(+). It functions in the pathway amine and polyamine biosynthesis; spermidine biosynthesis; spermidine from putrescine: step 1/1. In terms of biological role, catalyzes the irreversible transfer of a propylamine group from the amino donor S-adenosylmethioninamine (decarboxy-AdoMet) to putrescine (1,4-diaminobutane) to yield spermidine. The chain is Polyamine aminopropyltransferase from Pectobacterium carotovorum subsp. carotovorum (strain PC1).